The primary structure comprises 173 residues: Globin-like host-protective antigen (173 aa).

The N-terminal stretch at 1–15 (MRFLLLAAFVAYAYA) is a signal peptide. The Globin domain maps to 25-166 (ALSALDVVPL…FNDEAQKQLA (142 aa)). His114 is a binding site for heme b.

It belongs to the globin family.

It is found in the secreted. The protein localises to the extracellular space. May be a globin and may play a role in oxygen transport. The polypeptide is Globin-like host-protective antigen (Trichostrongylus colubriformis (Black scour worm)).